Reading from the N-terminus, the 105-residue chain is UPF0473 protein SAK_2028 (105 aa).

It belongs to the UPF0473 family.

This chain is UPF0473 protein SAK_2028, found in Streptococcus agalactiae serotype Ia (strain ATCC 27591 / A909 / CDC SS700).